The sequence spans 324 residues: Glycerol-3-phosphate dehydrogenase [NAD(P)+] (324 aa).

Tryptophan 15, arginine 35, and lysine 101 together coordinate NADPH. The sn-glycerol 3-phosphate site is built by lysine 101 and glycine 129. Residue alanine 133 participates in NADPH binding. Lysine 184, aspartate 237, serine 247, arginine 248, and asparagine 249 together coordinate sn-glycerol 3-phosphate. Lysine 184 functions as the Proton acceptor in the catalytic mechanism. NADPH is bound at residue arginine 248. 2 residues coordinate NADPH: valine 272 and glutamate 274.

Belongs to the NAD-dependent glycerol-3-phosphate dehydrogenase family.

The protein resides in the cytoplasm. The catalysed reaction is sn-glycerol 3-phosphate + NAD(+) = dihydroxyacetone phosphate + NADH + H(+). It carries out the reaction sn-glycerol 3-phosphate + NADP(+) = dihydroxyacetone phosphate + NADPH + H(+). Its pathway is membrane lipid metabolism; glycerophospholipid metabolism. Its function is as follows. Catalyzes the reduction of the glycolytic intermediate dihydroxyacetone phosphate (DHAP) to sn-glycerol 3-phosphate (G3P), the key precursor for phospholipid synthesis. This chain is Glycerol-3-phosphate dehydrogenase [NAD(P)+], found in Gluconobacter oxydans (strain 621H) (Gluconobacter suboxydans).